The sequence spans 1374 residues: Tripeptidyl-peptidase 2 (1374 aa).

A Peptidase S8 domain is found at 62–558 (ALLLNKTDTE…QGMIKIATAY (497 aa)). Active-site charge relay system residues include D93, H314, and S499.

Belongs to the peptidase S8 family. In terms of tissue distribution, expressed in intestinal fat-storing cells and some head neurons.

The catalysed reaction is Release of an N-terminal tripeptide from a polypeptide.. Component of the proteolytic cascade acting downstream of the 26S proteasome in the ubiquitin-proteasome pathway. Has a role in regulation of fat storage. This Caenorhabditis elegans protein is Tripeptidyl-peptidase 2 (tpp-2).